The primary structure comprises 403 residues: 4-hydroxy-3-methylbut-2-en-1-yl diphosphate synthase (ferredoxin) (403 aa).

Cys-312, Cys-315, Cys-346, and Glu-353 together coordinate [4Fe-4S] cluster.

The protein belongs to the IspG family. It depends on [4Fe-4S] cluster as a cofactor.

The enzyme catalyses (2E)-4-hydroxy-3-methylbut-2-enyl diphosphate + 2 oxidized [2Fe-2S]-[ferredoxin] + H2O = 2-C-methyl-D-erythritol 2,4-cyclic diphosphate + 2 reduced [2Fe-2S]-[ferredoxin] + H(+). It participates in isoprenoid biosynthesis; isopentenyl diphosphate biosynthesis via DXP pathway; isopentenyl diphosphate from 1-deoxy-D-xylulose 5-phosphate: step 5/6. Converts 2C-methyl-D-erythritol 2,4-cyclodiphosphate (ME-2,4cPP) into 1-hydroxy-2-methyl-2-(E)-butenyl 4-diphosphate. The chain is 4-hydroxy-3-methylbut-2-en-1-yl diphosphate synthase (ferredoxin) from Synechocystis sp. (strain ATCC 27184 / PCC 6803 / Kazusa).